The sequence spans 292 residues: MPWIQIKINATAKTANKVSNMLMGLGAQAVTYMDAQDTPVYEPLPGETKLWGDTRCIGLFDAEVDPAPIVAFFQQHFGEDVPYQVELLEDKDWVREWMEHFQPMQFGERLWICPSWRDVPDPTAVNVLLDPGLAFGTGTHPTTALCLQWLDSLDLKGKTLVDFGCGSGILAIAALKLGAERVIGIDIDPQAIEASRDNAQRNGVSDQLELYLPEDQPKNFQADIVVANILAGPLRELSGLISGLVKPHGLMAISGILESQAPELLEVYSQWFAMNPATEREEWCRLDGIKKG.

Residues threonine 143, glycine 164, aspartate 186, and asparagine 228 each contribute to the S-adenosyl-L-methionine site.

Belongs to the methyltransferase superfamily. PrmA family.

The protein resides in the cytoplasm. The enzyme catalyses L-lysyl-[protein] + 3 S-adenosyl-L-methionine = N(6),N(6),N(6)-trimethyl-L-lysyl-[protein] + 3 S-adenosyl-L-homocysteine + 3 H(+). In terms of biological role, methylates ribosomal protein L11. This Tolumonas auensis (strain DSM 9187 / NBRC 110442 / TA 4) protein is Ribosomal protein L11 methyltransferase.